A 512-amino-acid polypeptide reads, in one-letter code: MARAVHRSGLVALGIATALMASCAFAAKDVVVAVGSNFTTLDPYDANDTLSQAVAKSFYQGLFGLDKEMKLKNVLAESYTVSDDGITYTVKLREGIKFQDGTDFNAAAVKANLDRASDPANHLKRYNLYKNIAKTEAIDPTTVKITLKQPFSAFINILVHPATAMISPAALEKYGKEIGFHPVGTGPYELDTWNQTDFVKVKKFAGYWQPGLPKLDSITWRPVADNNTRAAMLQTGEAQFAFPIPYEQAALLEKNKNIELMASPSIMQRYISMNVTQKPFDNPKVREALNYAINRPALVKVAFAGYATPATGVVPPSIAYAQSYKPWPYDPVKARELLKEAGYPNGFSTTLWSSHNHSTAQKVLQFTQQQLAQVGIKAQVTAMDAGQRAAEVEGKGQKESGVRMFYTGWSASTGEADWALSPLFASQNWPPTLFNTAFYSNKQVDDFLAQALKTNDPAEKTRLYKAAQDIIWQESPWIPLVVEKLVSAHSKNLTGFWIMPDTGFSFEDADLQ.

The N-terminal stretch at 1 to 26 (MARAVHRSGLVALGIATALMASCAFA) is a signal peptide.

Belongs to the bacterial solute-binding protein 5 family. The complex is composed of two ATP-binding proteins (GsiA), two transmembrane proteins (GsiC and GsiD) and a solute-binding protein (GsiB).

The protein resides in the periplasm. In terms of biological role, part of the ABC transporter complex GsiABCD involved in glutathione import. Binds glutathione. This chain is Glutathione-binding protein GsiB, found in Shigella boydii serotype 4 (strain Sb227).